We begin with the raw amino-acid sequence, 300 residues long: uncharacterized protein (300 aa).

Helical transmembrane passes span 4–24, 31–51, 68–88, 95–115, 120–140, 146–166, 177–197, 214–234, 242–262, and 272–292; these read IIIIMLFFLVSITWGTTWIAM, IPPFFATGIRFLAASPLLIIL, FQIFISIFYFSIPFTLMLYGG, ISSIIFANMPVLVLIISHFYL, NFIQKVGMVIALITLFFVLLI, CFFQWKGILALLLALLSHAVI, VSVITFNALPSLISGIFLSII, ILAVFYLGNFCGICGILSYFY, FYASIVFLIFPLIAGFLEIYI, and LWFIIPSGLGILLTLIPINFF. 2 EamA domains span residues 15–139 and 161–287; these read ITWG…FVLL and LSHA…LTLI.

It belongs to the EamA transporter family.

Its subcellular location is the cell membrane. This is an uncharacterized protein from Buchnera aphidicola subsp. Schizaphis graminum (strain Sg).